The chain runs to 217 residues: MTTMLSIVQVKNNEIPKTLSIKKFKLIAGVDESGCGSLVGSVIAAAVILHSIQPISGLADSKTLNKNKRLNLYKNIIKNALAWSIGYADVTEIDRSNILEARLLAMKRAVHNLSVKPDLILIDGNRSPGFTEIPYQCFNKGDARIAIISAASIIAKVTRDQDMIILDKQYPKYGFAQNKGYPTFFHLKQLALYGPISQHRKSFAPVKHVISDINRKL.

One can recognise an RNase H type-2 domain in the interval 25–215; that stretch reads KLIAGVDESG…VKHVISDINR (191 aa). Residues Asp-31, Glu-32, and Asp-123 each coordinate a divalent metal cation.

Belongs to the RNase HII family. Requires Mn(2+) as cofactor. The cofactor is Mg(2+).

The protein resides in the cytoplasm. The catalysed reaction is Endonucleolytic cleavage to 5'-phosphomonoester.. Its function is as follows. Endonuclease that specifically degrades the RNA of RNA-DNA hybrids. This chain is Ribonuclease HII, found in Blochmanniella pennsylvanica (strain BPEN).